The primary structure comprises 439 residues: Probable tRNA pseudouridine synthase D (439 aa).

Catalysis depends on D87, which acts as the Nucleophile. A TRUD domain is found at 166 to 391 (GVPNFFGIQR…SKGLRREILL (226 aa)).

The protein belongs to the pseudouridine synthase TruD family.

The enzyme catalyses uridine(13) in tRNA = pseudouridine(13) in tRNA. In terms of biological role, could be responsible for synthesis of pseudouridine from uracil-13 in transfer RNAs. This chain is Probable tRNA pseudouridine synthase D, found in Methanococcoides burtonii (strain DSM 6242 / NBRC 107633 / OCM 468 / ACE-M).